Consider the following 209-residue polypeptide: NADH-quinone oxidoreductase subunit C (209 aa).

This sequence belongs to the complex I 30 kDa subunit family. In terms of assembly, NDH-1 is composed of 14 different subunits. Subunits NuoB, C, D, E, F, and G constitute the peripheral sector of the complex.

Its subcellular location is the cell inner membrane. It catalyses the reaction a quinone + NADH + 5 H(+)(in) = a quinol + NAD(+) + 4 H(+)(out). Its function is as follows. NDH-1 shuttles electrons from NADH, via FMN and iron-sulfur (Fe-S) centers, to quinones in the respiratory chain. The immediate electron acceptor for the enzyme in this species is believed to be ubiquinone. Couples the redox reaction to proton translocation (for every two electrons transferred, four hydrogen ions are translocated across the cytoplasmic membrane), and thus conserves the redox energy in a proton gradient. In Xanthobacter autotrophicus (strain ATCC BAA-1158 / Py2), this protein is NADH-quinone oxidoreductase subunit C.